The chain runs to 779 residues: ATP-dependent RNA helicase SUPV3L1, mitochondrial (779 aa).

The N-terminal 40 residues, 1-40 (MSLPRCTLLWARLPAGRGAGPRAAPCSALRALVGSFPGAS), are a transit peptide targeting the mitochondrion. At K99 the chain carries N6-acetyllysine. Positions 194–334 (EARARQRKII…AINLVSELLY (141 aa)) constitute a Helicase ATP-binding domain. Residue 207 to 214 (GPTNSGKT) coordinates ATP. The 169-residue stretch at 353–521 (VLDHALESLD…PTAEQIEMFA (169 aa)) folds into the Helicase C-terminal domain. Residues 650 to 779 (PDSSLVRSLQ…RRKKKDPDSD (130 aa)) form an interaction with LAMTOR5, important for protein stability region. Residues 693 to 703 (SGDQSRLSGAS) are compositionally biased toward polar residues. Disordered regions lie at residues 693–732 (SGDQ…KELP) and 754–779 (EWLT…PDSD). At S725 the chain carries Phosphoserine. Basic and acidic residues predominate over residues 761-779 (EHSREKVGTRRKKKDPDSD).

The protein belongs to the helicase family. In terms of assembly, homodimer; in free form. Component of the mitochondrial degradosome (mtEXO) complex which is a heteropentamer containing 2 copies of SUPV3L1 and 3 copies of PNPT1. As part of mitochondrial degradosome complex, interacts with GRSF1 in a RNA-dependent manner; the interaction enhances the activity of the complex. Interacts with LAMTOR5/HBXIP, WRN and BLM. Mg(2+) is required as a cofactor. It depends on Mn(2+) as a cofactor.

The protein localises to the nucleus. The protein resides in the mitochondrion matrix. It is found in the mitochondrion nucleoid. The catalysed reaction is ATP + H2O = ADP + phosphate + H(+). Helicase activity toward DNA substrate is inhibited by micromolar concentrations of 5,6-dichloro-1-(beta-D-ribofuranosyl)benzotriazole (DRBT) and 4,5,6,7-tetrabromobenzotriazole (TBBT). Helicase activity toward RNA substrate is inhibited by elevated concentrations of TBBT. Inhibited by some ring-expanded nucleoside analogs. Functionally, major helicase player in mitochondrial RNA metabolism. Component of the mitochondrial degradosome (mtEXO) complex, that degrades 3' overhang double-stranded RNA with a 3'-to-5' directionality in an ATP-dependent manner. Involved in the degradation of non-coding mitochondrial transcripts (MT-ncRNA) and tRNA-like molecules. ATPase and ATP-dependent multisubstrate helicase, able to unwind double-stranded (ds) DNA and RNA, and RNA/DNA heteroduplexes in the 5'-to-3' direction. Plays a role in the RNA surveillance system in mitochondria; regulates the stability of mature mRNAs, the removal of aberrantly formed mRNAs and the rapid degradation of non coding processing intermediates. Also implicated in recombination and chromatin maintenance pathways. May protect cells from apoptosis. Associates with mitochondrial DNA. The protein is ATP-dependent RNA helicase SUPV3L1, mitochondrial (Supv3l1) of Mus musculus (Mouse).